A 585-amino-acid chain; its full sequence is MAAVELEWIPETLYNTAISAVVDNYIRSRRDIRSLPENIQFDVYYKLYQQGRLCQLGSEFCELEVFAKVLRALDKRHLLHHCFQALMDHGVKVASVLAYSFSRRCSYIAESDAAVKEKAIQVGFVLGGFLSDAGWYSDAEKVFLSCLQLCTLHDEMLHWFRAVECCVRLLHVRNGNCKYHLGEETFKLAQTYMDKLSKHGQQANRAALYGELCALLFAKSHYDEAYKWCVEAMKEITAGLPVKVVVDVLRQASKACVVKREFKKAEQLIKHAVYLARDHFGSKHPKYSDTLLDYGFYLLNVDNICQSVAIYQAALDIRQSVFGGKNIHVATAHEDLAYSSYVHQYSSGKFDNALFHAERAIGIITHILPEDHLLLASSKRVKALILEEIAIDCHNKETEQRLLQEAHDLHLSSLQLAKKAFGEFNVQTAKHYGNLGRLYQSMRKFKEAEEMHIKAIQIKEQLLGQEDYEVALSVGHLASLYNYDMNQYENAEKLYLRSIAIGKKLFGEGYSGLEYDYRGLIKLYNSIGNYEKVFEYHNVLSNWNRLRDRQYSVTDALEDVSSSPQSTEEVVQSFLMAQNVEGPSC.

8 TPR repeats span residues 50-83, 120-153, 206-239, 288-321, 333-367, 429-462, 471-505, and 514-547; these read QGRL…HHCF, IQVG…CTLH, AALY…ITAG, SDTL…RQSV, HEDL…ITHI, AKHY…KEQL, ALSV…GKKL, and EYDY…NRLR.

As to quaternary structure, component of a CRL2 E3 ubiquitin-protein ligase complex, also named ECS (Elongin BC-CUL2/5-SOCS-box protein) complex, composed of CUL2, Elongin BC (ELOB and ELOC), RBX1 and substrate-specific adapter APPBP2. Interacts with APP; APP interaction inhibits the E3 ubiquitin-protein ligase activity of the CRL2(APPBP2) complex. Rapidly degraded by the proteasome upon overexpression of a C-terminal fragment of APP.

It localises to the nucleus. The protein resides in the cytoplasm. It is found in the cytoskeleton. The protein localises to the membrane. It participates in protein modification; protein ubiquitination. E3 ubiquitin-protein ligase activity of the CRL2(APPBP2) complex is inhibited by APP. Functionally, substrate-recognition component of a Cul2-RING (CRL2) E3 ubiquitin-protein ligase complex of the DesCEND (destruction via C-end degrons) pathway, which recognizes a C-degron located at the extreme C terminus of target proteins, leading to their ubiquitination and degradation. The C-degron recognized by the DesCEND pathway is usually a motif of less than ten residues and can be present in full-length proteins, truncated proteins or proteolytically cleaved forms. The CRL2(APPBP2) complex specifically recognizes proteins with a -Arg-Xaa-Xaa-Gly degron at the C-terminus, leading to their ubiquitination and degradation. The CRL2(APPBP2) complex mediates ubiquitination and degradation of truncated SELENOV selenoproteins produced by failed UGA/Sec decoding, which end with a -Arg-Xaa-Xaa-Gly degron. May play a role in intracellular protein transport: may be involved in the translocation of APP along microtubules toward the cell surface. The protein is Amyloid protein-binding protein 2 of Mus musculus (Mouse).